Consider the following 497-residue polypeptide: E3 ubiquitin-protein ligase CBL-C (497 aa).

The segment at 7 to 145 (PQGWQWGEPR…SALFPEGKYC (139 aa)) is 4H. The 315-residue stretch at 7-321 (PQGWQWGEPR…GKNHNPDLTE (315 aa)) folds into the Cbl-PTB domain. The tract at residues 146–218 (GHLYQITKGS…FEFDIFTRLF (73 aa)) is EF-hand-like. D199, T201, and E210 together coordinate Ca(2+). An SH2-like region spans residues 219–321 (QPWPTLLKNW…GKNHNPDLTE (103 aa)). R264 is a binding site for 4-O-phospho-L-tyrosine. Residues 322-350 (LCRAVLNQCIQVSQEQLQLYQAMNSTFEL) form a linker region. Y341 bears the Phosphotyrosine; by SRC mark. An RING-type zinc finger spans residues 351 to 390 (CKICTERDKDVRIEPCGHLLCSCCLAAWQHSDSQTCPFCR). An interaction with RET region spans residues 351 to 497 (CKICTERDKD…QVREGATESS (147 aa)).

As to quaternary structure, interacts with Ubiquitin-conjugating enzyme E2 UBE2D2 and UBE2D3. Interacts with EGFR (tyrosine phosphorylated). Interacts with the SH3 domain proteins LYN and CRK. Interacts (via RING-type zinc finger) with TGFB1I1 (via LIM zinc-binding domain 2); the interaction is direct and enhances the E3 activity. Interacts directly with RET (inactive) and CD2AP; dissociates from RET upon RET activation by GDNF which also increases the interaction with CD2AP suggesting dissociation as CBLC:CD2AP complex. Interacts with SRC; the interaction is enhanced when SRC is phosphorylated at 'Tyr-419'. Phosphorylated on multiple tyrosine residues by SRC. In terms of processing, autoubiquitinated, when phosphorylated at Tyr-341.

The enzyme catalyses S-ubiquitinyl-[E2 ubiquitin-conjugating enzyme]-L-cysteine + [acceptor protein]-L-lysine = [E2 ubiquitin-conjugating enzyme]-L-cysteine + N(6)-ubiquitinyl-[acceptor protein]-L-lysine.. With respect to regulation, phosphorylation at Tyr-341 is necessary and sufficient for the activation of E3 activity. In terms of biological role, acts as an E3 ubiquitin-protein ligase, which accepts ubiquitin from specific E2 ubiquitin-conjugating enzymes, and then transfers it to substrates promoting their degradation by the proteasome. Functionally coupled with the E2 ubiquitin-protein ligases UB2D1, UB2D2 and UB2D3. Regulator of EGFR mediated signal transduction; upon EGF activation, ubiquitinates EGFR. Inhibits EGF stimulated MAPK1 activation. Promotes ubiquitination of SRC phosphorylated at 'Tyr-419', has the highest ubiquitin ligase activity among CBL family proteins. In collaboration with CD2AP may act as regulatory checkpoint for Ret signaling by modulating the rate of RET degradation after ligand activation; CD2AP converts it from an inhibitor to a promoter of RET degradation; the function limits the potency of GDNF on neuronal survival. The protein is E3 ubiquitin-protein ligase CBL-C (Cblc) of Rattus norvegicus (Rat).